We begin with the raw amino-acid sequence, 311 residues long: GTP cyclohydrolase MptA (311 aa).

The protein belongs to the GTP cyclohydrolase IV family. In terms of assembly, homodimer. It depends on Fe(2+) as a cofactor.

It carries out the reaction GTP + H2O = 7,8-dihydroneopterin 2',3'-cyclic phosphate + formate + diphosphate + H(+). Its pathway is cofactor biosynthesis; 5,6,7,8-tetrahydromethanopterin biosynthesis. Converts GTP to 7,8-dihydro-D-neopterin 2',3'-cyclic phosphate, the first intermediate in the biosynthesis of coenzyme methanopterin. The protein is GTP cyclohydrolase MptA of Methanobrevibacter smithii (strain ATCC 35061 / DSM 861 / OCM 144 / PS).